A 447-amino-acid polypeptide reads, in one-letter code: 3-O-methyltransferase 2 (447 aa).

S-adenosyl-L-methionine contacts are provided by residues 264-265, aspartate 287, 318-319, and arginine 334; these read GG and DF. The active-site Proton acceptor is the histidine 338.

It belongs to the class I-like SAM-binding methyltransferase superfamily. Cation-independent O-methyltransferase family. COMT subfamily.

Functionally, S-adenosyl-L-methionine-dependent methyltransferase that preferentially catalyzes the methylation of 3-OH phenolic compounds like isovanillic acid and 3-OH-4-Met cinnamic acid. May play a role in promoting lignin degradation by methylating and inactivating free-hydroxyl phenolic compounds, products of lignin cleavage which are known inhibitors of lignin peroxidases. The sequence is that of 3-O-methyltransferase 2 from Phanerochaete chrysosporium (strain RP-78 / ATCC MYA-4764 / FGSC 9002) (White-rot fungus).